Consider the following 405-residue polypeptide: S-adenosylmethionine sensor upstream of mTORC1 (405 aa).

A disordered region spans residues 1-34 (MEPGAGGRNTARAQRAGSPNTPPPREQERKLEQE). The span at 25 to 34 (REQERKLEQE) shows a compositional bias: basic and acidic residues. S-adenosyl-L-methionine contacts are provided by Arg-95, Gly-172, Asp-190, Asp-202, Phe-203, and Ser-244.

The protein belongs to the BMT2/SAMTOR family. Interacts with the DEPDC5 subunit of the GATOR1 complex; interaction is disrupted when SAMTOR binds S-adenosyl-L-methionine. Interacts with the KICSTOR complex; interaction is disrupted when SAMTOR binds S-adenosyl-L-methionine.

Functionally, S-adenosyl-L-methionine-binding protein that acts as an inhibitor of mTORC1 signaling via interaction with the GATOR1 and KICSTOR complexes. Acts as a sensor of S-adenosyl-L-methionine to signal methionine sufficiency to mTORC1: in presence of methionine, binds S-adenosyl-L-methionine, leading to disrupt interaction with the GATOR1 and KICSTOR complexes and promote mTORC1 signaling. Upon methionine starvation, S-adenosyl-L-methionine levels are reduced, thereby promoting the association with GATOR1 and KICSTOR, leading to inhibit mTORC1 signaling. Probably also acts as a S-adenosyl-L-methionine-dependent methyltransferase (Potential). In Homo sapiens (Human), this protein is S-adenosylmethionine sensor upstream of mTORC1.